The chain runs to 689 residues: Potassium-transporting ATPase ATP-binding subunit (689 aa).

The next 4 membrane-spanning stretches (helical) occupy residues 35-55 (VMFV…AILA), 62-82 (AAFT…ANFA), 220-240 (ALTI…ATLF), and 260-280 (VLVA…LSAI). Catalysis depends on D313, which acts as the 4-aspartylphosphate intermediate. ATP is bound by residues D350, E354, 383-390 (FSAQTRMS), and K401. Mg(2+) is bound by residues D524 and D528. The next 3 membrane-spanning stretches (helical) occupy residues 594–614 (FAII…LNVM), 622–642 (AIMS…PLAL), and 665–685 (VGGL…LVAL).

Belongs to the cation transport ATPase (P-type) (TC 3.A.3) family. Type IA subfamily. In terms of assembly, the system is composed of three essential subunits: KdpA, KdpB and KdpC.

The protein localises to the cell inner membrane. It catalyses the reaction K(+)(out) + ATP + H2O = K(+)(in) + ADP + phosphate + H(+). Its function is as follows. Part of the high-affinity ATP-driven potassium transport (or Kdp) system, which catalyzes the hydrolysis of ATP coupled with the electrogenic transport of potassium into the cytoplasm. This subunit is responsible for energy coupling to the transport system and for the release of the potassium ions to the cytoplasm. This chain is Potassium-transporting ATPase ATP-binding subunit, found in Serratia proteamaculans (strain 568).